The chain runs to 515 residues: Sphingolipid 10-desaturase (515 aa).

A helical transmembrane segment spans residues 3-23 (AVWALLWALQLGTLVGCALVL). Positions 46–113 (AKPISDQKAA…DISFVFRVMH (68 aa)) constitute a Cytochrome b5 heme-binding domain. Heme-binding residues include histidine 90 and histidine 113. Residues 198-218 (TWLLWNTAVLISIIALSVISM) traverse the membrane as a helical segment. The Histidine box-1 signature appears at 245-249 (HDAEH). A helical transmembrane segment spans residues 258-278 (LNDILGWIYGTVFLGVNGAWW). The short motif at 281-286 (EHREHH) is the Histidine box-2 element. The next 3 helical transmembrane spans lie at 322-342 (IIHF…FIVG), 359-379 (PWTI…LSQT), and 382-402 (PIPV…QLLG). A Histidine box-3 motif is present at residues 447–451 (HYSHH).

It belongs to the fatty acid desaturase type 1 family. Requires Fe(2+) as cofactor.

It localises to the membrane. The enzyme catalyses a (4E,8E)-4-sphinga-4,8-dienine ceramide + 2 Fe(II)-[cytochrome b5] + O2 + 2 H(+) = an N-acyl-(4E,8E,10E)-sphingatrienine + 2 Fe(III)-[cytochrome b5] + 2 H2O. It participates in lipid metabolism; sphingolipid metabolism. Fatty acid desaturase that catalyzes the introduction of the third double bond at the Delta(10) position in d18:3Delta4,8,10 triunsaturated sphingolipid long fatty acid chains. The cytochrome b5 domain probably acts as the direct electron donor to the active site of the desaturase. The sequence is that of Sphingolipid 10-desaturase from Thalassiosira pseudonana (Marine diatom).